A 195-amino-acid polypeptide reads, in one-letter code: MLWIFWLVFAYFLGSIPFGLFIGKICCNCDIRTEGSKSTGATNVARLCGFKYGVAALVLDVAKGFVPVLMAYQYSHNWIFISLVAAAAVIGHVFSIFMDMKGGKAVATTIGVFLALAPVATFYSIVFLLAVIALSGFVSMGSLTFAVALPFFTLVTGSVGMVPLACGMTVLLFWTHRENIRRLAKGQENSWKKKK.

Helical transmembrane passes span 2 to 22 (LWIFWLVFAYFLGSIPFGLFI), 52 to 72 (YGVAALVLDVAKGFVPVLMAY), 78 to 98 (WIFISLVAAAAVIGHVFSIFM), 112 to 132 (VFLALAPVATFYSIVFLLAVI), and 145 to 165 (FAVALPFFTLVTGSVGMVPLA).

This sequence belongs to the PlsY family. As to quaternary structure, probably interacts with PlsX.

It localises to the cell inner membrane. It catalyses the reaction an acyl phosphate + sn-glycerol 3-phosphate = a 1-acyl-sn-glycero-3-phosphate + phosphate. It functions in the pathway lipid metabolism; phospholipid metabolism. Catalyzes the transfer of an acyl group from acyl-phosphate (acyl-PO(4)) to glycerol-3-phosphate (G3P) to form lysophosphatidic acid (LPA). This enzyme utilizes acyl-phosphate as fatty acyl donor, but not acyl-CoA or acyl-ACP. The chain is Glycerol-3-phosphate acyltransferase from Maridesulfovibrio salexigens (strain ATCC 14822 / DSM 2638 / NCIMB 8403 / VKM B-1763) (Desulfovibrio salexigens).